A 141-amino-acid chain; its full sequence is MLMPKRTKYRKMMKGRNRGYANRGTEFTFGDFALKATEAGRINSRQIEAARIALTRFVKRQGKTWIRVFPDKPLTKKPLETRMGKGKGAVEEWVMNIKPGRIIYEMAGVNEEMARQALTLAMHKLPFKTKFVTRESQNEIY.

The protein belongs to the universal ribosomal protein uL16 family. Part of the 50S ribosomal subunit.

In terms of biological role, binds 23S rRNA and is also seen to make contacts with the A and possibly P site tRNAs. The chain is Large ribosomal subunit protein uL16 from Campylobacter lari (strain RM2100 / D67 / ATCC BAA-1060).